A 183-amino-acid polypeptide reads, in one-letter code: Ran guanine nucleotide release factor (183 aa).

Positions 23 to 66 (ELRQIPDNQEVFAHSQTDQSIIIELLEYQSQVQDADAARYHFED) are interaction with RAN.

Belongs to the MOG1 family. Monomer. Interacts with ran.

The protein resides in the nucleus. Its subcellular location is the cytoplasm. It is found in the perinuclear region. The protein localises to the cell membrane. In terms of biological role, may regulate the intracellular trafficking of RAN. Promotes guanine nucleotide release from RAN and inhibits binding of new GTP. Plays a role in the regulation of the levels of GTP-bound RAN in the nucleus. Required for normal expression of the ion channel hcn4 and for normal expression of the cardiac transcription factors nkx2.5, gata4 and hand2 during embryonic development. Required for normal embryonic heart development and normal heart rate. The sequence is that of Ran guanine nucleotide release factor from Danio rerio (Zebrafish).